The following is a 55-amino-acid chain: Large ribosomal subunit protein bL33B (55 aa).

It belongs to the bacterial ribosomal protein bL33 family.

The sequence is that of Large ribosomal subunit protein bL33B from Salinispora arenicola (strain CNS-205).